The chain runs to 214 residues: C-type lectin domain family 2 member L (214 aa).

Residues M1–T56 form a disordered region. Pro residues predominate over residues R10–R31. S32 is modified (phosphoserine). A helical membrane pass occupies residues L69–A89. Positions Y107–S209 constitute a C-type lectin domain. Cystine bridges form between C128-C208 and C187-C200.

Its subcellular location is the membrane. This is C-type lectin domain family 2 member L (CLEC2L) from Homo sapiens (Human).